Here is a 35-residue protein sequence, read N- to C-terminus: ECRYWLGGCSAGQTCCKHLVCSRRHGWCVWDGTFS.

Intrachain disulfides connect Cys2-Cys16, Cys9-Cys21, and Cys15-Cys28.

It belongs to the neurotoxin 10 (Hwtx-1) family. 54 (ProTx-1) subfamily. An unnatural amidation at Ser-35 provokes a 14-fold increased toxin ability to inhibit Nav1.2/SCN2A and a ~2-fold decreased toxin ability to inhibit both Nav1.5/SCN5A and Nav1.7/SCN9A. As to expression, expressed by the venom gland.

It localises to the secreted. In terms of biological role, ion channel impairing toxin that inhibits voltage-gated calcium channel Cav3.1/CACNA1G (IC(50)=53 nM), voltage-gated potassium channels Kv2.1/KCNB1 (IC(50)=411 nM), all sodium channels tested (Nav1.2/SCN2A (IC(50)=60-104 nM), Nav1.5/SCN5A (IC(50)=76-358 nM), Nav1.6/SCN8A (IC(50)=21-133 nM), Nav1.7/SCN9A (IC(50)=51-95 nM), and Nav1.8/SCN10A) as well as the nociceptor cation channel TRPA1 (IC(50)=389 nM). Acts as a potent and selective blocker of voltage-gated calcium channel Cav3.1/CACNA1G, but not of Cav3.2/CACNA1H, and Cav3.3/CACNA1I. On Nav1.7/SCN9A, primarily interacts with the DII and DIV voltage-sensor domains. Also acts as an inhibitor of nociceptor cation channel TRPA1 (IC(50)~389 nM) by binding to the S1-S4 gating domain of TRPA1. It shows moderate affinity for lipid bilayers. The chain is Beta/omega-theraphotoxin-Bp1a from Bumba pulcherrimaklaasi (Tarantula spider).